The primary structure comprises 219 residues: Large ribosomal subunit protein bL25 (219 aa).

Residues 193–219 (VSSTELEETPEVPASAVPTTDQGESAE) form a disordered region. A compositionally biased stretch (polar residues) spans 209–219 (VPTTDQGESAE).

This sequence belongs to the bacterial ribosomal protein bL25 family. CTC subfamily. Part of the 50S ribosomal subunit; part of the 5S rRNA/L5/L18/L25 subcomplex. Contacts the 5S rRNA. Binds to the 5S rRNA independently of L5 and L18.

Its function is as follows. This is one of the proteins that binds to the 5S RNA in the ribosome where it forms part of the central protuberance. The polypeptide is Large ribosomal subunit protein bL25 (Legionella pneumophila (strain Corby)).